Here is a 444-residue protein sequence, read N- to C-terminus: MKSQSKRTSRLFVFVGVVVAIIIAVLSWRYFGTGSDNNTSGAQQSARGQDTSHGGRRNTPLAPVQAATATEQEVPRYLTGLGTVIAANTVTVTSRVDGELMALHFTEGQQVKAGDLLAEIDPRPYEVQLTQAQGQLAKDQATLDNARRDLARYQKLSKTGLISQQELDTQSSLVRQSEGSVKADQGAIDSAKLQLTYSRITAPISGRVGLKQVDVGNYITSGTATPIVVITQTHPVDVVFTLPESDIPAIMQAQKNAEKTHAIVPVEAWDRTNKQMLAQGYLLSIDNQIDTTTGTIKLKARFNNEDDVLFPNQFVNARIKVDLLQNAVVVPTAAVQMGSEGNFVWTLDDANKVSKHLVTTGIQNSQQVVIDAGLNAGQRVVTDGIDRLTEGVQVEVVTPRSANTDTNPASAEKAAAEAEGSTPHQGRGRPANAPARSTTAAEKS.

The first 20 residues, 1-20 (MKSQSKRTSRLFVFVGVVVA), serve as a signal peptide directing secretion. Residues 37-52 (NNTSGAQQSARGQDTS) show a composition bias toward polar residues. Disordered stretches follow at residues 37 to 60 (NNTS…RNTP) and 398 to 444 (TPRS…AEKS). Low complexity predominate over residues 409–419 (ASAEKAAAEAE). Positions 435-444 (ARSTTAAEKS) are enriched in polar residues.

It belongs to the membrane fusion protein (MFP) (TC 8.A.1) family. In terms of assembly, part of a tripartite efflux system composed of MdtA, MdtB and MdtC.

It localises to the cell inner membrane. The polypeptide is Multidrug resistance protein MdtA (Yersinia pseudotuberculosis serotype O:3 (strain YPIII)).